Reading from the N-terminus, the 579-residue chain is UPF0329 protein ECU06_1620 (579 aa).

Disordered regions lie at residues 325 to 360 (EEKA…GEEA) and 370 to 389 (ARRK…KIHK). A compositionally biased stretch (basic residues) spans 329–338 (KGRKDGKKKS). A compositionally biased stretch (acidic residues) spans 345-360 (KEEESETEEVEAGEEA).

The protein belongs to the UPF0329 family.

This Encephalitozoon cuniculi (strain GB-M1) (Microsporidian parasite) protein is UPF0329 protein ECU06_1620.